The primary structure comprises 530 residues: MPPLLLLSALIFLVNVLGGAPGHNPNRRAKMISIHSLSELERLKLQEAAYHELVARQFLSEFKPERALPTDRSNTFEKWFLILRGQERAVSLKTFGIRLEEVLVNELTRRKQVELRATMQMQEAAGPATSGRRRGNAVQRMFGRIRRIFSGRRDEPFLPREFTRRGRRGAVSADSLAELEGGALLLQTLQLSRISFPIGQRLLGSKRKMSLNPIAKQIPHVVEACCSFIEKHGLSTVGIFTLEYSEKRVRKLREEFDQGLDVVLDDSQNVHDVAALLKEFFRDMKDSLLPDDLYMSFLQTATLKPQDQLSALQLLVYLMPPCHSDTLERLLKVLHKVAENCEDSIGIDGQLVSGNRMTSTNLALVFGSALLKKGASAKRESRKTRLGIDHYVASVSVVRAMIDNWDVLFQVPPHIQKQVAKRVWKSSPEALDFIRRRNLRKIQSERIKMEEDALLSDPVETSAEARAAILGQSKPFDEGSSEEPAVPPGTARSHDDEEGAGNPLILEQDRPLLRVPREKEAKTGIGYFFP.

A signal peptide spans 1–19 (MPPLLLLSALIFLVNVLGG). A Rho-GAP domain is found at 209–409 (MSLNPIAKQI…AMIDNWDVLF (201 aa)). A disordered region spans residues 471 to 512 (GQSKPFDEGSSEEPAVPPGTARSHDDEEGAGNPLILEQDRPL).

In terms of assembly, may interacts (via the Rho-GAP domain) with the active form of RAC1.

Functionally, GTPase activator for the Rho-type GTPases by converting them to an inactive GDP-bound state. The protein is Rho GTPase-activating protein 36 (ARHGAP36) of Bos taurus (Bovine).